The chain runs to 327 residues: uncharacterized protein (327 aa).

The segment at 12–31 (PLGTTKSYHMNTSTVSPPSP) is disordered. A run of 2 helical transmembrane segments spans residues 183-203 (VSSPSVEVYIAGCCGGVPVIL) and 292-312 (VGVGIGLGMCLGVGIGVGLLM).

The protein resides in the membrane. This is an uncharacterized protein from Arabidopsis thaliana (Mouse-ear cress).